We begin with the raw amino-acid sequence, 548 residues long: Cleavage and polyadenylation specificity factor subunit 6 (548 aa).

Residues 81 to 161 (IALYIGNLTW…QKPIVTPCNK (81 aa)) form the RRM domain. A compositionally biased stretch (polar residues) spans 169–180 (MQSRKTATQAGQ). Disordered stretches follow at residues 169–401 (MQSR…MDVV) and 473–548 (LHGI…YRHR). 3 stretches are compositionally biased toward pro residues: residues 221 to 279 (PAGP…PPVM), 294 to 362 (PPGP…PPPG), and 373 to 384 (GPPPSDPYGRPP). 2 stretches are compositionally biased toward basic and acidic residues: residues 385–400 (PYERGDYGPPGRDMDV) and 490–500 (RSRERDHSRSR). Residues 501 to 511 (EKSRRHKSRSR) are compositionally biased toward basic residues. The segment covering 512–548 (DRHDDYYRERSRERERHRDRERDRDRERDREREYRHR) has biased composition (basic and acidic residues).

It belongs to the RRM CPSF6/7 family. As to quaternary structure, component of the cleavage factor Im (CFIm) complex.

It localises to the nucleus. Its subcellular location is the nucleoplasm. The protein localises to the nucleus speckle. The protein resides in the cytoplasm. Functionally, component of the cleavage factor Im (CFIm) complex that functions as an activator of the pre-mRNA 3'-end cleavage and polyadenylation processing required for the maturation of pre-mRNA into functional mRNAs. CFIm contributes to the recruitment of multiprotein complexes on specific sequences on the pre-mRNA 3'-end, so called cleavage and polyadenylation signals (pA signals). Most pre-mRNAs contain multiple pA signals, resulting in alternative cleavage and polyadenylation (APA) producing mRNAs with variable 3'-end formation. The CFIm complex acts as a key regulator of cleavage and polyadenylation site choice during APA through its binding to 5'-UGUA-3' elements localized in the 3'-untranslated region (UTR) for a huge number of pre-mRNAs. Plays a role in mRNA export. The sequence is that of Cleavage and polyadenylation specificity factor subunit 6 from Xenopus laevis (African clawed frog).